The following is a 383-amino-acid chain: S-adenosylmethionine synthase (383 aa).

Histidine 15 contributes to the ATP binding site. Mg(2+) is bound at residue aspartate 17. Glutamate 43 contributes to the K(+) binding site. Glutamate 56 and glutamine 99 together coordinate L-methionine. Positions 99-109 (QSPDINQGVDR) are flexible loop. ATP is bound by residues 164–166 (DAK), 230–231 (RF), aspartate 239, 245–246 (RK), alanine 262, and lysine 266. Aspartate 239 serves as a coordination point for L-methionine. Residue lysine 270 coordinates L-methionine.

The protein belongs to the AdoMet synthase family. As to quaternary structure, homotetramer; dimer of dimers. It depends on Mg(2+) as a cofactor. K(+) serves as cofactor.

Its subcellular location is the cytoplasm. The enzyme catalyses L-methionine + ATP + H2O = S-adenosyl-L-methionine + phosphate + diphosphate. It participates in amino-acid biosynthesis; S-adenosyl-L-methionine biosynthesis; S-adenosyl-L-methionine from L-methionine: step 1/1. In terms of biological role, catalyzes the formation of S-adenosylmethionine (AdoMet) from methionine and ATP. The overall synthetic reaction is composed of two sequential steps, AdoMet formation and the subsequent tripolyphosphate hydrolysis which occurs prior to release of AdoMet from the enzyme. The chain is S-adenosylmethionine synthase from Shewanella sp. (strain ANA-3).